The sequence spans 50 residues: uncharacterized protein (50 aa).

This is an uncharacterized protein from Treponema pallidum (strain Nichols).